The following is a 210-amino-acid chain: Large ribosomal subunit protein uL3 (210 aa).

Belongs to the universal ribosomal protein uL3 family. In terms of assembly, part of the 50S ribosomal subunit. Forms a cluster with proteins L14 and L19.

Its function is as follows. One of the primary rRNA binding proteins, it binds directly near the 3'-end of the 23S rRNA, where it nucleates assembly of the 50S subunit. This Solibacter usitatus (strain Ellin6076) protein is Large ribosomal subunit protein uL3.